We begin with the raw amino-acid sequence, 404 residues long: MQYSEIMIRYGELSTKGKNRMRFINKLRNNISDVLSIYPQVKVTADRDRAHAYLNGADYTAVAESLKQVFGIQNFSPVYKVEKSVEVLKSAVQEIMQDIYKEGMTFKISSKRSDHTFELDSRELNQTLGGAVFEAIPNVQAQMKSPDINLQVEIREEAAYLSYETVRGAGGLPVGTSGKGMLMLSGGIDSPVAGYLALKRGVDIEAVHFASPPYTSPGALKKAQDLTRKLTKFGGNIQFIEVPFTEIQEEIKAKAPEAYLMTLTRRFMMRITDRIREVRNGLVIINGESLGQVASQTLESMKAINAVTNTPIIRPVVTMDKLEIIDIAQEIDTFDISIQPFEDCCTIFAPDRPKTNPKIKNAEQYEARMDVEGLVERAVAGIMITEITPQAEKDEVDDLIDNLL.

One can recognise a THUMP domain in the interval 60 to 165; it reads TAVAESLKQV…EEAAYLSYET (106 aa). Residues 183 to 184, 208 to 209, R265, G287, and Q296 each bind ATP; these read ML and HF.

It belongs to the ThiI family.

It is found in the cytoplasm. It carries out the reaction [ThiI sulfur-carrier protein]-S-sulfanyl-L-cysteine + a uridine in tRNA + 2 reduced [2Fe-2S]-[ferredoxin] + ATP + H(+) = [ThiI sulfur-carrier protein]-L-cysteine + a 4-thiouridine in tRNA + 2 oxidized [2Fe-2S]-[ferredoxin] + AMP + diphosphate. The enzyme catalyses [ThiS sulfur-carrier protein]-C-terminal Gly-Gly-AMP + S-sulfanyl-L-cysteinyl-[cysteine desulfurase] + AH2 = [ThiS sulfur-carrier protein]-C-terminal-Gly-aminoethanethioate + L-cysteinyl-[cysteine desulfurase] + A + AMP + 2 H(+). Its pathway is cofactor biosynthesis; thiamine diphosphate biosynthesis. Functionally, catalyzes the ATP-dependent transfer of a sulfur to tRNA to produce 4-thiouridine in position 8 of tRNAs, which functions as a near-UV photosensor. Also catalyzes the transfer of sulfur to the sulfur carrier protein ThiS, forming ThiS-thiocarboxylate. This is a step in the synthesis of thiazole, in the thiamine biosynthesis pathway. The sulfur is donated as persulfide by IscS. This Streptococcus pneumoniae (strain ATCC 700669 / Spain 23F-1) protein is Probable tRNA sulfurtransferase.